We begin with the raw amino-acid sequence, 377 residues long: Protein RecA (377 aa).

76–83 (GPESSGKT) serves as a coordination point for ATP.

It belongs to the RecA family.

Its subcellular location is the cytoplasm. Its function is as follows. Can catalyze the hydrolysis of ATP in the presence of single-stranded DNA, the ATP-dependent uptake of single-stranded DNA by duplex DNA, and the ATP-dependent hybridization of homologous single-stranded DNAs. It interacts with LexA causing its activation and leading to its autocatalytic cleavage. The sequence is that of Protein RecA from Corynebacterium aurimucosum (strain ATCC 700975 / DSM 44827 / CIP 107346 / CN-1) (Corynebacterium nigricans).